Reading from the N-terminus, the 169-residue chain is S-ribosylhomocysteine lyase (169 aa).

3 residues coordinate Fe cation: histidine 54, histidine 58, and cysteine 128.

This sequence belongs to the LuxS family. In terms of assembly, homodimer. The cofactor is Fe cation.

The catalysed reaction is S-(5-deoxy-D-ribos-5-yl)-L-homocysteine = (S)-4,5-dihydroxypentane-2,3-dione + L-homocysteine. In terms of biological role, involved in the synthesis of autoinducer 2 (AI-2) which is secreted by bacteria and is used to communicate both the cell density and the metabolic potential of the environment. The regulation of gene expression in response to changes in cell density is called quorum sensing. Catalyzes the transformation of S-ribosylhomocysteine (RHC) to homocysteine (HC) and 4,5-dihydroxy-2,3-pentadione (DPD). In Shewanella sp. (strain MR-7), this protein is S-ribosylhomocysteine lyase.